The sequence spans 343 residues: Protein RecA (343 aa).

This sequence belongs to the RecA family.

The protein resides in the cytoplasm. Functionally, can catalyze the hydrolysis of ATP in the presence of single-stranded DNA, the ATP-dependent uptake of single-stranded DNA by duplex DNA, and the ATP-dependent hybridization of homologous single-stranded DNAs. It interacts with LexA causing its activation and leading to its autocatalytic cleavage. The chain is Protein RecA from Coxiella burnetii (strain RSA 493 / Nine Mile phase I).